Consider the following 464-residue polypeptide: MLATRRLLGWSLPARVSVRFSGDTTAPKKTSFGSLKDEDRIFTNLYGRHDWRLKGSLSRGDWYKTKEILLKGPDWILGEIKTSGLRGRGGAGFPTGLKWSFMNKPSDGRPKYLVVNADEGEPGTCKDREILRHDPHKLLEGCLVGGRAMGARAAYIYIRGEFYNEASNLQVAIREAYEAGLIGKNACGSGYDFDVFVVRGAGAYICGEETALIESIEGKQGKPRLKPPFPADVGVFGCPTTVANVETVAVSPTICRRGGTWFAGFGRERNSGTKLFNISGHVNHPCTVEEEMSVPLKELIEKHAGGVTGGWDNLLAVIPGGSSTPLIPKSVCETVLMDFDALVQAQTGLGTAAVIVMDRSTDIVKAIARLIEFYKHESCGQCTPCREGVDWMNKVMARFVRGDARPAEIDSLWEISKQIEGHTICALGDGAAWPVQGLIRHFRPELEERMQRFAQQHQARQAAS.

Residues 1-20 constitute a mitochondrion transit peptide; the sequence is MLATRRLLGWSLPARVSVRF. An N6-acetyllysine; alternate modification is found at Lys-81. Lys-81 carries the N6-succinyllysine; alternate modification. 87 to 96 lines the NADH pocket; it reads GRGGAGFPTG. Lys-104 carries the post-translational modification N6-acetyllysine. 199-247 lines the FMN pocket; it reads RGAGAYICGEETALIESIEGKQGKPRLKPPFPADVGVFGCPTTVANVET. Arg-257 carries the omega-N-methylarginine modification. Lys-375 bears the N6-acetyllysine mark. 4 residues coordinate [4Fe-4S] cluster: Cys-379, Cys-382, Cys-385, and Cys-425.

It belongs to the complex I 51 kDa subunit family. Core subunit of respiratory chain NADH dehydrogenase (Complex I) which is composed of 45 different subunits. This is a component of the flavoprotein-sulfur (FP) fragment of the enzyme. Interacts with RAB5IF. FMN serves as cofactor. It depends on [4Fe-4S] cluster as a cofactor.

It is found in the mitochondrion inner membrane. The enzyme catalyses a ubiquinone + NADH + 5 H(+)(in) = a ubiquinol + NAD(+) + 4 H(+)(out). Functionally, core subunit of the mitochondrial membrane respiratory chain NADH dehydrogenase (Complex I) which catalyzes electron transfer from NADH through the respiratory chain, using ubiquinone as an electron acceptor. Part of the peripheral arm of the enzyme, where the electrons from NADH are accepted by flavin mononucleotide (FMN) and then passed along a chain of iron-sulfur clusters by electron tunnelling to the final acceptor ubiquinone. Contains FMN, which is the initial electron acceptor as well as one iron-sulfur cluster. In Homo sapiens (Human), this protein is NADH dehydrogenase [ubiquinone] flavoprotein 1, mitochondrial.